A 275-amino-acid polypeptide reads, in one-letter code: Undecaprenyl-diphosphatase (275 aa).

8 helical membrane passes run 1–21, 42–62, 80–100, 107–127, 147–167, 184–204, 214–234, and 249–269; these read MDWVYAIVYGIVEGITEFLPI, VKDAFEVVIQGGAILSVLVYY, TLWTGVLVATIPAVVLGLAFG, LFKPSVVAWALIVGGVLMWLI, SLLIGVLQCLALVWPGFSRSA, TKFSFYLGVPTLGGAALLNLV, IGLLNVVLGAGVSFVVAYLAI, and FAVYRVAVGVLILVLIATGVM.

This sequence belongs to the UppP family.

It is found in the cell membrane. The enzyme catalyses di-trans,octa-cis-undecaprenyl diphosphate + H2O = di-trans,octa-cis-undecaprenyl phosphate + phosphate + H(+). Functionally, catalyzes the dephosphorylation of undecaprenyl diphosphate (UPP). Confers resistance to bacitracin. The sequence is that of Undecaprenyl-diphosphatase from Deinococcus deserti (strain DSM 17065 / CIP 109153 / LMG 22923 / VCD115).